Consider the following 366-residue polypeptide: Ribosomal RNA large subunit methyltransferase M (366 aa).

Residues Ser188, 221-224 (CPGG), Asp240, Asp260, and Asp277 each bind S-adenosyl-L-methionine. Lys306 acts as the Proton acceptor in catalysis.

The protein belongs to the class I-like SAM-binding methyltransferase superfamily. RNA methyltransferase RlmE family. RlmM subfamily. As to quaternary structure, monomer.

It is found in the cytoplasm. The enzyme catalyses cytidine(2498) in 23S rRNA + S-adenosyl-L-methionine = 2'-O-methylcytidine(2498) in 23S rRNA + S-adenosyl-L-homocysteine + H(+). Its function is as follows. Catalyzes the 2'-O-methylation at nucleotide C2498 in 23S rRNA. The polypeptide is Ribosomal RNA large subunit methyltransferase M (Photorhabdus asymbiotica subsp. asymbiotica (strain ATCC 43949 / 3105-77) (Xenorhabdus luminescens (strain 2))).